The sequence spans 156 residues: Small ribosomal subunit protein uS7 (156 aa).

This sequence belongs to the universal ribosomal protein uS7 family. As to quaternary structure, part of the 30S ribosomal subunit. Contacts proteins S9 and S11.

One of the primary rRNA binding proteins, it binds directly to 16S rRNA where it nucleates assembly of the head domain of the 30S subunit. Is located at the subunit interface close to the decoding center, probably blocks exit of the E-site tRNA. The chain is Small ribosomal subunit protein uS7 from Bradyrhizobium sp. (strain BTAi1 / ATCC BAA-1182).